We begin with the raw amino-acid sequence, 83 residues long: Bublin coiled-coil protein (83 aa).

The segment at 1 to 25 (MSGPNGDLGMPVDAGTEGENDSFGE) is disordered. Residues 25-74 (EAEYAAINSMLDQINSCLDHLEEKNDHLHARLQELLESNRQTRLEFQQQL) are a coiled coil. S82 bears the Phosphoserine mark.

The protein belongs to the UPF0184 (EST00098) family.

Its subcellular location is the cell junction. It localises to the cytoplasm. It is found in the cytoskeleton. In terms of biological role, essential for intermediate filament organization in intestinal cells, interacts with intermediate filament and regulates intestinal lumen morphology. This Mus musculus (Mouse) protein is Bublin coiled-coil protein.